Consider the following 170-residue polypeptide: Prenyl-diphosphate phosphatase (170 aa).

A Nudix hydrolase domain is found at 25 to 155 (HIHRASQLIL…PGNYTPALRE (131 aa)). Residues 59–83 (YSVSGTVADESYEACIAREMLEEIG) carry the Nudix box motif. Residues Glu-77 and Glu-81 each contribute to the Mg(2+) site.

This sequence belongs to the Nudix hydrolase family. Mg(2+) is required as a cofactor.

The enzyme catalyses dimethylallyl diphosphate + H2O = dimethylallyl phosphate + phosphate + H(+). The catalysed reaction is isopentenyl diphosphate + H2O = isopentenyl phosphate + phosphate + H(+). It catalyses the reaction (2E,6E)-farnesyl diphosphate + H2O = (2E,6E)-farnesyl phosphate + phosphate + H(+). It carries out the reaction (2E)-geranyl diphosphate + H2O = (2E)-geranyl phosphate + phosphate + H(+). The protein operates within isoprenoid biosynthesis. Its function is as follows. Hydrolyzes homoallylic isopentenyl diphosphate (IPP), its allylic isomer dimethylallyl diphosphate (DMAPP) and short-chain prenyl diphosphates geranyl diphosphate (GPP) and farnesyl diphosphate (FPP) to their corresponding monophosphate forms with high activity. The preferred substrate is IPP. ADP, NADPH, Ap5A and thiamine diphosphate (TPP) are weakly hydrolyzed. No hydrolysis with ATP, dNTPs, 8-OH-dGTP, NAD+, FAD or acetyl-CoA. The likely physiological role of this enzyme is to provide a substrate dimethylallyl phosphate (DMAP) for prenylated flavin mononucleotide (prenyl-FMN) synthase MM_1871 involved in the biosynthesis of prenyl-FMN, a coenzyme required in the archaea-specific mevalonate pathway. This Methanosarcina mazei (strain ATCC BAA-159 / DSM 3647 / Goe1 / Go1 / JCM 11833 / OCM 88) (Methanosarcina frisia) protein is Prenyl-diphosphate phosphatase.